The following is a 393-amino-acid chain: NAD(P)H-quinone oxidoreductase subunit H, chloroplastic (393 aa).

The protein belongs to the complex I 49 kDa subunit family. In terms of assembly, NDH is composed of at least 16 different subunits, 5 of which are encoded in the nucleus.

Its subcellular location is the plastid. The protein localises to the chloroplast thylakoid membrane. It carries out the reaction a plastoquinone + NADH + (n+1) H(+)(in) = a plastoquinol + NAD(+) + n H(+)(out). It catalyses the reaction a plastoquinone + NADPH + (n+1) H(+)(in) = a plastoquinol + NADP(+) + n H(+)(out). NDH shuttles electrons from NAD(P)H:plastoquinone, via FMN and iron-sulfur (Fe-S) centers, to quinones in the photosynthetic chain and possibly in a chloroplast respiratory chain. The immediate electron acceptor for the enzyme in this species is believed to be plastoquinone. Couples the redox reaction to proton translocation, and thus conserves the redox energy in a proton gradient. The protein is NAD(P)H-quinone oxidoreductase subunit H, chloroplastic of Helianthus annuus (Common sunflower).